The chain runs to 491 residues: E3 ubiquitin-protein ligase Hakai (491 aa).

Positions 1–61 are disordered; that stretch reads MDHTDNELQG…PAKAPPGDEE (61 aa). The RING-type zinc finger occupies 109 to 149; the sequence is CDKCGLPIKIYGRMIPCKHVFCYDCAILHEKKGDKMCPGCS. The interval 148–206 is HYB domain; it reads CSDPVQRIEQCTRGSLFMCSIVQGCKRTYLSQRDLQAHINHRHMRAGKPVTRASLENVH. Residues 164 to 190 form a C2H2-type zinc finger; it reads FMCSIVQGCKRTYLSQRDLQAHINHRH. Residues Ser-201, Ser-285, and Ser-290 each carry the phosphoserine modification. Residues 255–491 are disordered; the sequence is QPHEDIRAPP…DQTRYRPYYQ (237 aa). Pro residues-rich tracts occupy residues 342–359, 372–389, and 399–423; these read APPP…PHPP, APPP…PPPG, and MNHP…PPHH. Polar residues predominate over residues 427–442; sequence NSLPQFTEDQGTLSPP. The segment covering 457-478 has biased composition (pro residues); sequence PRGPPPPPRLQGPPSQTPLPGP.

The protein belongs to the Hakai family. Homodimer. Interacts with tyrosine-phosphorylated SRC substrates. Component of the WMM complex, a N6-methyltransferase complex composed of a catalytic subcomplex, named MAC, and of an associated subcomplex, named MACOM. The MAC subcomplex is composed of METTL3 and METTL14. The MACOM subcomplex is composed of WTAP, ZC3H13, CBLL1/HAKAI, VIRMA, and, in some cases of RBM15 (RBM15 or RBM15B). Also a component of a MACOM-like complex, named WTAP complex, composed of WTAP, ZC3H13, CBLL1, VIRMA, RBM15, BCLAF1 and THRAP3. Phosphorylated on tyrosine residues.

It localises to the nucleus speckle. The protein resides in the nucleus. The protein localises to the nucleoplasm. Its subcellular location is the cytoplasm. The enzyme catalyses S-ubiquitinyl-[E2 ubiquitin-conjugating enzyme]-L-cysteine + [acceptor protein]-L-lysine = [E2 ubiquitin-conjugating enzyme]-L-cysteine + N(6)-ubiquitinyl-[acceptor protein]-L-lysine.. The protein operates within protein modification; protein ubiquitination. Its function is as follows. E3 ubiquitin-protein ligase that mediates ubiquitination of several tyrosine-phosphorylated Src substrates, including CDH1, CTTN and DOK1. Targets CDH1 for endocytosis and degradation. Associated component of the WMM complex, a complex that mediates N6-methyladenosine (m6A) methylation of RNAs, a modification that plays a role in the efficiency of mRNA splicing and RNA processing. Its function in the WMM complex is unknown. The chain is E3 ubiquitin-protein ligase Hakai from Homo sapiens (Human).